We begin with the raw amino-acid sequence, 224 residues long: PKHD-type hydroxylase Shewana3_0717 (224 aa).

The region spanning 78 to 176 (QFYPPLFNRY…RTAAFMWLQS (99 aa)) is the Fe2OG dioxygenase domain. The Fe cation site is built by histidine 96, aspartate 98, and histidine 157. Arginine 167 serves as a coordination point for 2-oxoglutarate.

Requires Fe(2+) as cofactor. L-ascorbate is required as a cofactor.

The sequence is that of PKHD-type hydroxylase Shewana3_0717 from Shewanella sp. (strain ANA-3).